Here is a 345-residue protein sequence, read N- to C-terminus: Prenyltransferase ltmC (345 aa).

H112 serves as a coordination point for substrate. Positions 119 and 123 each coordinate Mg(2+). R128 is a substrate binding site. The N-linked (GlcNAc...) asparagine glycan is linked to N130. Residues K212, T213, Q243, N250, and K260 each contribute to the substrate site.

This sequence belongs to the FPP/GGPP synthase family. Requires Mg(2+) as cofactor.

It functions in the pathway secondary metabolite biosynthesis. In terms of biological role, prenyltransferase; part of the gene cluster that mediates the biosynthesis of lolitrems, indole-diterpene mycotoxins that are potent tremorgens in mammals, and are synthesized by clavicipitaceous fungal endophytes in association with their grass hosts. The geranylgeranyl diphosphate (GGPP) synthase ltmG is proposed to catalyze the first step in lolitrem biosynthesis. LtmG catalyzes a series of iterative condensations of isopentenyl diphosphate (IPP) with dimethylallyl diphosphate (DMAPP), geranyl diphosphate (GPP), and farnesyl diphosphate (FPP), to form GGPP. GGPP then condenses with indole-3-glycerol phosphate to form 3-geranylgeranylindole, an acyclic intermediate, to be incorporated into paxilline. Either ltmG or ltmC could be responsible for this step, as both are putative prenyl transferases. The FAD-dependent monooxygenase ltmM then catalyzes the epoxidation of the two terminal alkenes of the geranylgeranyl moiety, which is subsequently cyclized by ltmB, to paspaline. The cytochrome P450 monooxygenases ltmQ and ltmP can sequentially oxidize paspaline to terpendole E and terpendole F. Alternatively, ltmP converts paspaline to an intermediate which is oxidized by ltmQ to terpendole F. LtmF, ltmK, ltmE and ltmJ appear to be unique to the epichloe endophytes. The prenyltransferase ltmF is involved in the 27-hydroxyl-O-prenylation. The cytochrome P450 monooxygenase ltmK is required for the oxidative acetal ring formation. The multi-functional prenyltransferase ltmE is required for C20- and C21-prenylations of the indole ring of paspalanes and acts together with the cytochrome P450 monooxygenase ltmJ to yield lolitremanes by multiple oxidations and ring closures. The stereoisomer pairs of lolitriol and lolitrem N or lolitrem B and lolitrem F may be attributed to variations in the way in which ring closure can occur under the action of ltmJ. While the major product of this pathway is lolitrem B, the prenyl transferases and cytochrome P450 monooxygenases identified in this pathway have a remarkable versatility in their regio- and stereo-specificities to generate a diverse range of metabolites that are products of a metabolic grid rather than a linear pathway. The protein is Prenyltransferase ltmC of Epichloe festucae var. lolii (Neotyphodium lolii).